Reading from the N-terminus, the 276-residue chain is NADPH-dependent 7-cyano-7-deazaguanine reductase (276 aa).

80 to 82 contacts substrate; that stretch reads IES. 82-83 contributes to the NADPH binding site; it reads SK. Cys-178 acts as the Thioimide intermediate in catalysis. The Proton donor role is filled by Asp-185. Residue 217–218 participates in substrate binding; the sequence is HE. Position 246–247 (246–247) interacts with NADPH; the sequence is RG.

This sequence belongs to the GTP cyclohydrolase I family. QueF type 2 subfamily. As to quaternary structure, homodimer.

The protein resides in the cytoplasm. The enzyme catalyses 7-aminomethyl-7-carbaguanine + 2 NADP(+) = 7-cyano-7-deazaguanine + 2 NADPH + 3 H(+). The protein operates within tRNA modification; tRNA-queuosine biosynthesis. In terms of biological role, catalyzes the NADPH-dependent reduction of 7-cyano-7-deazaguanine (preQ0) to 7-aminomethyl-7-deazaguanine (preQ1). The chain is NADPH-dependent 7-cyano-7-deazaguanine reductase from Teredinibacter turnerae (strain ATCC 39867 / T7901).